A 397-amino-acid chain; its full sequence is uncharacterized protein (397 aa).

The tract at residues 368-391 (TTKPGLHQPTQKRPTQTTSKPYIN) is disordered. The span at 375–388 (QPTQKRPTQTTSKP) shows a compositional bias: polar residues.

This is an uncharacterized protein from Acanthamoeba polyphaga mimivirus (APMV).